A 260-amino-acid chain; its full sequence is Cytochrome c oxidase subunit 3 (260 aa).

The Mitochondrial matrix segment spans residues 1–15; the sequence is MAHQAHAYHMVDPSP. The chain crosses the membrane as a helical span at residues 16-34; the sequence is WPLTGAVAALLLTSGLAMW. The Mitochondrial intermembrane segment spans residues 35-40; the sequence is FHFGSM. The chain crosses the membrane as a helical span at residues 41 to 66; that stretch reads ILLTLGLITMVLTMIQWWRDVIREGT. The Mitochondrial matrix portion of the chain corresponds to 67–72; it reads FQGHHT. A helical membrane pass occupies residues 73 to 105; it reads PPVQKGLRYGMILFITSEVFFFIGFFWAFYNSS. Topologically, residues 106-128 are mitochondrial intermembrane; that stretch reads LAPTYELGECWPPTGITPLNPFE. The helical transmembrane segment at 129–152 threads the bilayer; it reads VPLLNTAVLLASGVTVTWAHHSIM. At 153 to 155 the chain is on the mitochondrial matrix side; it reads HGD. The helical transmembrane segment at 156–183 threads the bilayer; it reads RKEAIQSLTLTILLGLYFTALQAMEYYE. The Mitochondrial intermembrane segment spans residues 184–190; sequence APFTIAD. A helical membrane pass occupies residues 191-223; the sequence is GVYGSTFFVATGFHGLHVIIGSLFLSVCLLRQI. Topologically, residues 224-232 are mitochondrial matrix; that stretch reads QYHFTSKHH. Residues 233–255 form a helical membrane-spanning segment; it reads FGFEAAWYWHFVDVVWLFLYVSI. Over 256–260 the chain is Mitochondrial intermembrane; sequence YWWGS.

The protein belongs to the cytochrome c oxidase subunit 3 family. In terms of assembly, component of the cytochrome c oxidase (complex IV, CIV), a multisubunit enzyme composed of 14 subunits. The complex is composed of a catalytic core of 3 subunits MT-CO1, MT-CO2 and MT-CO3, encoded in the mitochondrial DNA, and 11 supernumerary subunits COX4I, COX5A, COX5B, COX6A, COX6B, COX6C, COX7A, COX7B, COX7C, COX8 and NDUFA4, which are encoded in the nuclear genome. The complex exists as a monomer or a dimer and forms supercomplexes (SCs) in the inner mitochondrial membrane with NADH-ubiquinone oxidoreductase (complex I, CI) and ubiquinol-cytochrome c oxidoreductase (cytochrome b-c1 complex, complex III, CIII), resulting in different assemblies (supercomplex SCI(1)III(2)IV(1) and megacomplex MCI(2)III(2)IV(2)).

It localises to the mitochondrion inner membrane. The enzyme catalyses 4 Fe(II)-[cytochrome c] + O2 + 8 H(+)(in) = 4 Fe(III)-[cytochrome c] + 2 H2O + 4 H(+)(out). Component of the cytochrome c oxidase, the last enzyme in the mitochondrial electron transport chain which drives oxidative phosphorylation. The respiratory chain contains 3 multisubunit complexes succinate dehydrogenase (complex II, CII), ubiquinol-cytochrome c oxidoreductase (cytochrome b-c1 complex, complex III, CIII) and cytochrome c oxidase (complex IV, CIV), that cooperate to transfer electrons derived from NADH and succinate to molecular oxygen, creating an electrochemical gradient over the inner membrane that drives transmembrane transport and the ATP synthase. Cytochrome c oxidase is the component of the respiratory chain that catalyzes the reduction of oxygen to water. Electrons originating from reduced cytochrome c in the intermembrane space (IMS) are transferred via the dinuclear copper A center (CU(A)) of subunit 2 and heme A of subunit 1 to the active site in subunit 1, a binuclear center (BNC) formed by heme A3 and copper B (CU(B)). The BNC reduces molecular oxygen to 2 water molecules using 4 electrons from cytochrome c in the IMS and 4 protons from the mitochondrial matrix. The polypeptide is Cytochrome c oxidase subunit 3 (mt-co3) (Xenopus laevis (African clawed frog)).